A 62-amino-acid polypeptide reads, in one-letter code: Photosystem II reaction center protein Z (62 aa).

2 helical membrane passes run 8 to 28 and 41 to 61; these read AVFA…VVFA and FSGT…NSLI.

The protein belongs to the PsbZ family. In terms of assembly, PSII is composed of 1 copy each of membrane proteins PsbA, PsbB, PsbC, PsbD, PsbE, PsbF, PsbH, PsbI, PsbJ, PsbK, PsbL, PsbM, PsbT, PsbY, PsbZ, Psb30/Ycf12, at least 3 peripheral proteins of the oxygen-evolving complex and a large number of cofactors. It forms dimeric complexes.

It localises to the plastid. It is found in the chloroplast thylakoid membrane. In terms of biological role, may control the interaction of photosystem II (PSII) cores with the light-harvesting antenna, regulates electron flow through the 2 photosystem reaction centers. PSII is a light-driven water plastoquinone oxidoreductase, using light energy to abstract electrons from H(2)O, generating a proton gradient subsequently used for ATP formation. In Daucus carota (Wild carrot), this protein is Photosystem II reaction center protein Z.